Reading from the N-terminus, the 571-residue chain is UvrABC system protein C (571 aa).

The region spanning 15–93 is the GIY-YIG domain; it reads TSPGVYLWKD…IDRYNPEFNI (79 aa). In terms of domain architecture, UVR spans 184 to 219; sequence NNYINELTNKMHQAANNMQFELALFLRDGLTYLKKL.

Belongs to the UvrC family. In terms of assembly, interacts with UvrB in an incision complex.

The protein localises to the cytoplasm. Its function is as follows. The UvrABC repair system catalyzes the recognition and processing of DNA lesions. UvrC both incises the 5' and 3' sides of the lesion. The N-terminal half is responsible for the 3' incision and the C-terminal half is responsible for the 5' incision. The protein is UvrABC system protein C of Mycoplasmopsis bovis (strain ATCC 25523 / DSM 22781 / NCTC 10131 / PG45) (Mycoplasma bovis).